The chain runs to 630 residues: Amino acid transporter heavy chain SLC3A2 (630 aa).

Position 1 is an N-acetylmethionine (methionine 1). Glutamate 2 is modified (N-acetylserine). Glutamate 2 carries the phosphoserine modification. A disordered region spans residues 15–39 (IPRQLPGSHSEAGVQGLSAGDDSEL). At 102–184 (MSQDTEVDMK…SPGWVRTRWA (83 aa)) the chain is on the cytoplasmic side. Serine 103 is modified (phosphoserine). At threonine 106 the chain carries Phosphothreonine. Serine 134 bears the Phosphoserine mark. Lysine 147 participates in a covalent cross-link: Glycyl lysine isopeptide (Lys-Gly) (interchain with G-Cter in ubiquitin). Phosphoserine is present on serine 165. Lysine 166 participates in a covalent cross-link: Glycyl lysine isopeptide (Lys-Gly) (interchain with G-Cter in SUMO2). A helical; Signal-anchor for type II membrane protein transmembrane segment spans residues 185 to 205 (LLLLFWLGWLGMLAGAVVIIV). Over 206–630 (RAPRCRELPA…GLLLRFPYAA (425 aa)) the chain is Extracellular. N-linked (GlcNAc...) asparagine glycans are attached at residues asparagine 365 and asparagine 381. Residues serine 406, serine 408, and serine 410 each carry the phosphoserine modification. N-linked (GlcNAc...) (complex) asparagine glycosylation is present at asparagine 424. An N-linked (GlcNAc...) asparagine glycan is attached at asparagine 506. Phosphoserine is present on residues serine 527 and serine 531.

Disulfide-linked heterodimer with a non-glycosylated catalytic light subunit (SLC7A5, SLC7A6, SLC7A7, SLC7A8, SLC7A10 or SLC7A11). Interacts with TLCD3A/CT120. Interacts with ICAM1. Constitutively and specifically associates with beta-1 integrins (alpha-2/beta-1, alpha-3/beta-1, alpha-5/beta-1 and alpha-6/beta-1), but minimally with alpha-4/beta-1. Interacts with LAPTM4B; recruits SLC3A2 and SLC7A5/LAT1 to lysosomes to promote leucine uptake into these organelles and is required for mTORC1 activation. In terms of assembly, (Microbial infection) Interacts with hepatitis C virus/HCV envelope glycoprotein E2; the interaction may facilitate viral entry into host cell. Post-translationally, N-glycosylated; N-glycosylation is crucial for trafficking and stability of SLC3A2 to the plasma membrane. Phosphorylation on Ser-406; Ser-408 or Ser-410 and on Ser-527 or Ser-531 by ecto-protein kinases favors heterotypic cell-cell interactions. In terms of tissue distribution, expressed ubiquitously in all tissues tested with highest levels detected in kidney, placenta and testis and weakest level in thymus. During gestation, expression in the placenta was significantly stronger at full-term than at the mid-trimester stage. Expressed in HUVECS and at low levels in resting peripheral blood T-lymphocytes and quiescent fibroblasts. Also expressed in fetal liver and in the astrocytic process of primary astrocytic gliomas. Expressed in retinal endothelial cells and in the intestinal epithelial cell line C2BBe1.

It localises to the apical cell membrane. It is found in the cell membrane. The protein localises to the cell junction. Its subcellular location is the lysosome membrane. The protein resides in the melanosome. It localises to the basolateral cell membrane. In terms of biological role, acts as a chaperone that facilitates biogenesis and trafficking of functional transporters heterodimers to the plasma membrane. Forms heterodimer with SLC7 family transporters (SLC7A5, SLC7A6, SLC7A7, SLC7A8, SLC7A10 and SLC7A11), a group of amino-acid antiporters. Heterodimers function as amino acids exchangers, the specificity of the substrate depending on the SLC7A subunit. Heterodimers SLC3A2/SLC7A6 or SLC3A2/SLC7A7 mediate the uptake of dibasic amino acids. Heterodimer SLC3A2/SLC7A11 functions as an antiporter by mediating the exchange of extracellular anionic L-cystine and intracellular L-glutamate across the cellular plasma membrane. SLC3A2/SLC7A10 translocates small neutral L- and D-amino acids across the plasma membrane. SLC3A2/SLC75 or SLC3A2/SLC7A8 translocates neutral amino acids with broad specificity, thyroid hormones and L-DOPA. SLC3A2 is essential for plasma membrane localization, stability, and the transport activity of SLC7A5 and SLC7A8. When associated with LAPTM4B, the heterodimer SLC7A5 is recruited to lysosomes to promote leucine uptake into these organelles, and thereby mediates mTORC1 activation. Modulates integrin-related signaling and is essential for integrin-dependent cell spreading, migration and tumor progression. Functionally, (Microbial infection) In case of hepatitis C virus/HCV infection, the complex formed by SLC3A2 and SLC7A5/LAT1 plays a role in HCV propagation by facilitating viral entry into host cell and increasing L-leucine uptake-mediated mTORC1 signaling activation, thereby contributing to HCV-mediated pathogenesis. (Microbial infection) Acts as a receptor for malaria parasite Plasmodium vivax (Thai isolate) in immature red blood cells. The protein is Amino acid transporter heavy chain SLC3A2 of Homo sapiens (Human).